The primary structure comprises 113 residues: Ribonuclease P protein component (113 aa).

This sequence belongs to the RnpA family. As to quaternary structure, consists of a catalytic RNA component (M1 or rnpB) and a protein subunit.

It carries out the reaction Endonucleolytic cleavage of RNA, removing 5'-extranucleotides from tRNA precursor.. In terms of biological role, RNaseP catalyzes the removal of the 5'-leader sequence from pre-tRNA to produce the mature 5'-terminus. It can also cleave other RNA substrates such as 4.5S RNA. The protein component plays an auxiliary but essential role in vivo by binding to the 5'-leader sequence and broadening the substrate specificity of the ribozyme. This chain is Ribonuclease P protein component, found in Clostridium novyi (strain NT).